A 491-amino-acid polypeptide reads, in one-letter code: (1S)-1-hydroxy-luvungin A synthase CYP88A37 (491 aa).

A helical transmembrane segment spans residues 5-25; the sequence is FSWLILALAIFIGTYAFVFGV. Cys439 lines the heme pocket.

Belongs to the cytochrome P450 family. Heme serves as cofactor. As to expression, expressed in maturing fruits and in juice vesicles.

The protein localises to the membrane. It catalyses the reaction luvungin A + reduced [NADPH--hemoprotein reductase] + O2 = (1S)-1-hydroxy-luvungin A + oxidized [NADPH--hemoprotein reductase] + H2O + H(+). Its pathway is secondary metabolite biosynthesis; terpenoid biosynthesis. Functionally, monooxygenase involved in the biosynthesis of limonoids triterpene natural products such as limonin, a compound with insecticidal activity responsible for the bitter taste in citrus. Catalyzes the conversion of luvungin A to (1S)-1-hydroxy-luvungin A. The chain is (1S)-1-hydroxy-luvungin A synthase CYP88A37 from Citrus sinensis (Sweet orange).